Reading from the N-terminus, the 450-residue chain is Saccharopine dehydrogenase [NADP(+), L-glutamate-forming] (450 aa).

NADP(+) contacts are provided by residues 11 to 14, 33 to 35, 55 to 56, isoleucine 76, 98 to 99, 125 to 127, and serine 175; these read SGFV, CRT, DV, TS, and LDP. Residues 99–100 and aspartate 126 each bind L-saccharopine; that span reads SY. Residues arginine 224 and 245–247 each bind L-saccharopine; that span reads TLR.

The protein belongs to the saccharopine dehydrogenase family. Homodimer.

It carries out the reaction L-saccharopine + NADP(+) + H2O = (S)-2-amino-6-oxohexanoate + L-glutamate + NADPH + H(+). It participates in amino-acid biosynthesis; L-lysine biosynthesis via AAA pathway; L-lysine from L-alpha-aminoadipate (fungal route): step 2/3. In Pyricularia oryzae (strain 70-15 / ATCC MYA-4617 / FGSC 8958) (Rice blast fungus), this protein is Saccharopine dehydrogenase [NADP(+), L-glutamate-forming] (LYS3).